The following is a 263-amino-acid chain: Endonuclease 8 (263 aa).

P2 serves as the catalytic Schiff-base intermediate with DNA. The Proton donor role is filled by E3. K53 functions as the Proton donor; for beta-elimination activity in the catalytic mechanism. Q70, R125, and N169 together coordinate DNA. The FPG-type zinc finger occupies 229-263 (KVFHRDGEACERCGGIIEKTTLSSRPFYWCPHCQK). Residue R253 is the Proton donor; for delta-elimination activity of the active site.

The protein belongs to the FPG family. Requires Zn(2+) as cofactor.

It carries out the reaction 2'-deoxyribonucleotide-(2'-deoxyribose 5'-phosphate)-2'-deoxyribonucleotide-DNA = a 3'-end 2'-deoxyribonucleotide-(2,3-dehydro-2,3-deoxyribose 5'-phosphate)-DNA + a 5'-end 5'-phospho-2'-deoxyribonucleoside-DNA + H(+). Functionally, involved in base excision repair of DNA damaged by oxidation or by mutagenic agents. Acts as a DNA glycosylase that recognizes and removes damaged bases. Has a preference for oxidized pyrimidines, such as thymine glycol, 5,6-dihydrouracil and 5,6-dihydrothymine. Has AP (apurinic/apyrimidinic) lyase activity and introduces nicks in the DNA strand. Cleaves the DNA backbone by beta-delta elimination to generate a single-strand break at the site of the removed base with both 3'- and 5'-phosphates. In Salmonella paratyphi B (strain ATCC BAA-1250 / SPB7), this protein is Endonuclease 8.